A 224-amino-acid chain; its full sequence is Phosphoglycolate phosphatase (224 aa).

Catalysis depends on Asp-11, which acts as the Nucleophile. The Mg(2+) site is built by Asp-11, Asp-13, and Asp-177.

Belongs to the HAD-like hydrolase superfamily. CbbY/CbbZ/Gph/YieH family. The cofactor is Mg(2+).

The enzyme catalyses 2-phosphoglycolate + H2O = glycolate + phosphate. It functions in the pathway organic acid metabolism; glycolate biosynthesis; glycolate from 2-phosphoglycolate: step 1/1. Its function is as follows. Specifically catalyzes the dephosphorylation of 2-phosphoglycolate. Is involved in the dissimilation of the intracellular 2-phosphoglycolate formed during the DNA repair of 3'-phosphoglycolate ends, a major class of DNA lesions induced by oxidative stress. The sequence is that of Phosphoglycolate phosphatase from Haemophilus influenzae (strain 86-028NP).